A 23-amino-acid polypeptide reads, in one-letter code: Ascaphin-1 (23 aa).

Asparagine amide is present on Asn-23.

Expressed by the skin glands.

It is found in the secreted. In terms of biological role, antimicrobial peptide that shows higher potency against Gram-negative bacteria than against Gram-positive bacteria. Has a very week hemolytic activity. The polypeptide is Ascaphin-1 (Ascaphus truei (Coastal tailed frog)).